Reading from the N-terminus, the 121-residue chain is Large ribosomal subunit protein uL24 (121 aa).

Positions 1–30 (MVRIVSKQPRKQRKARYNAPNHTRGRFLSA) are disordered.

It belongs to the universal ribosomal protein uL24 family. In terms of assembly, part of the 50S ribosomal subunit.

One of two assembly initiator proteins, it binds directly to the 5'-end of the 23S rRNA, where it nucleates assembly of the 50S subunit. Its function is as follows. Located at the polypeptide exit tunnel on the outside of the subunit. This Methanoculleus marisnigri (strain ATCC 35101 / DSM 1498 / JR1) protein is Large ribosomal subunit protein uL24.